Here is a 762-residue protein sequence, read N- to C-terminus: 1-phosphatidylinositol 4,5-bisphosphate phosphodiesterase delta-4 (762 aa).

Residues 16–124 enclose the PH domain; sequence LLMQEGMPMR…WMRGLQLLVD (109 aa). The substrate binding stretch occupies residues 26–53; it reads KVRSKSWKKLRYFRLQNDGMTVWHARQA. EF-hand domains are found at residues 134–169, 170–205, and 206–237; these read RLDQWLSDWFQRGDKNQDGKMSFQEVQRLLHLMNVE, MDQEYAFSLFQAADTSQSGTLEGEEFVQFYKALTKR, and AEVQELFESFSADGQKLTLLEFLDFLREEQKE. Ca(2+) contacts are provided by Asp-147, Asn-149, Asp-151, Lys-153, Glu-158, Asp-183, Ser-185, Ser-187, Thr-189, and Glu-194. The GBA signature appears at 213–243; the sequence is ESFSADGQKLTLLEFLDFLREEQKERDCTSE. The PI-PLC X-box domain maps to 290 to 435; it reads QDMTQPLNHY…LRRRILVKGK (146 aa). The active site involves His-305. Residues Asn-306, Glu-335, and Asp-337 each contribute to the Ca(2+) site. His-350 is an active-site residue. Glu-384 contributes to the Ca(2+) binding site. Substrate contacts are provided by Lys-433 and Lys-435. Positions 443–471 are enriched in acidic residues; it reads LEYEEEEAEPELEESELALESQFETEPEP. Positions 443–483 are disordered; that stretch reads LEYEEEEAEPELEESELALESQFETEPEPQEQNLQSKDKKK. Ser-457 is modified (phosphoserine). The region spanning 493–609 is the PI-PLC Y-box domain; it reads LSSLVIYLKS…GYVLKPDFLR (117 aa). 2 residues coordinate substrate: Ser-522 and Arg-549. Positions 609–736 constitute a C2 domain; it reads RDIQSSFHPE…QGYRHIHLLS (128 aa). Ca(2+) is bound by residues Ile-650, Asp-652, Asn-676, Asp-705, Tyr-706, and Asp-707. Positions 731 to 734 match the PDZ-binding motif; the sequence is HIHL.

Interacts with GRIP1. Interacts (via GBA motif) with guanine nucleotide-binding protein G(i) alpha subunit GNAI3 (inactive GDP-bound form); low-affinity interaction. Ca(2+) serves as cofactor.

The protein localises to the membrane. It localises to the nucleus. The protein resides in the cytoplasm. It is found in the endoplasmic reticulum. It catalyses the reaction a 1,2-diacyl-sn-glycero-3-phospho-(1D-myo-inositol-4,5-bisphosphate) + H2O = 1D-myo-inositol 1,4,5-trisphosphate + a 1,2-diacyl-sn-glycerol + H(+). The catalysed reaction is a 1,2-diacyl-sn-glycero-3-phospho-(1D-myo-inositol) + H2O = 1D-myo-inositol 1-phosphate + a 1,2-diacyl-sn-glycerol + H(+). Functionally, hydrolyzes the phosphatidylinositol 4,5-bisphosphate (PIP2) to generate 2 second messenger molecules diacylglycerol (DAG) and inositol 1,4,5-trisphosphate (IP3). DAG mediates the activation of protein kinase C (PKC), while IP3 releases Ca(2+) from intracellular stores. Required for acrosome reaction in sperm during fertilization, probably by acting as an important enzyme for intracellular Ca(2+) mobilization in the zona pellucida-induced acrosome reaction. May play a role in cell growth. Modulates the liver regeneration in cooperation with nuclear PKC. Overexpression up-regulates the Erk signaling pathway and proliferation. The chain is 1-phosphatidylinositol 4,5-bisphosphate phosphodiesterase delta-4 (PLCD4) from Pongo abelii (Sumatran orangutan).